We begin with the raw amino-acid sequence, 409 residues long: LysM domain-containing GPI-anchored protein LYP6 (409 aa).

The N-terminal stretch at 1–27 is a signal peptide; it reads MAGWPAAEAAGALVVAILAAAAGGAAG. 4 disulfide bridges follow: Cys-34-Cys-100, Cys-40-Cys-166, Cys-98-Cys-164, and Cys-100-Cys-166. Positions 110 to 160 constitute a LysM 1 domain; the sequence is VRYSARPADTLASVADVVFAGLASADQIRTANGLSAEDPDAPLDAGATLVV. N-linked (GlcNAc...) asparagine glycosylation is present at Asn-168. Residues 179–222 enclose the LysM 2 domain; that stretch reads LSYVVRVGDTVQSIAATHATTVTDISNVNAMGSPIVAPGDILAI. 2 disulfides stabilise this stretch: Cys-227-Cys-259 and Cys-254-Cys-282. Residue Asn-244 is glycosylated (N-linked (GlcNAc...) asparagine). N-linked (GlcNAc...) asparagine glycans are attached at residues Asn-291, Asn-302, and Asn-313. Positions 353–387 are disordered; that stretch reads SPAPGAGEAGGDIPGFPGSSNVSPANGPSGSVSQA. A compositionally biased stretch (polar residues) spans 370–387; that stretch reads GSSNVSPANGPSGSVSQA. Ala-387 carries the GPI-anchor amidated alanine lipid modification. A propeptide spans 388–409 (removed in mature form); the sequence is ASVNRPHQIVALILSVALYFQM.

In terms of assembly, interacts with LYP4. Interacts with CERK1. Interacts with CEBIP. In terms of tissue distribution, expressed in roots and leaves.

The protein resides in the cell membrane. Functionally, functions in innate immunity. Functions as a pattern recognition receptor (PRR), sensing bacterial peptidoglycan (PGN) and fungal chitin at the cell surface. Involved in resistance against the bacterial pathogen Xanthomonas oryzae pv. oryzae (Xoo) and the fungal pathogen Magnaporthe oryzae. Binds PGN and fungal chitin in vitro. Involved in microbe-associated molecular patterns (MAMPs) perception and participates in the activation of defense genes against the bacterial pathogen Xanthomonas oryzae pv. oryzicola (Xoc) or the fungal pathogen Magnaporthe oryzae. The sequence is that of LysM domain-containing GPI-anchored protein LYP6 from Oryza sativa subsp. japonica (Rice).